Reading from the N-terminus, the 1818-residue chain is Nestin (1818 aa).

Positions 1 to 14 are coil 1B; that stretch reads WREKLEAEVQRQNL. One can recognise an IF rod domain in the interval 1–135; it reads WREKLEAEVQ…TLLEAENSRL (135 aa). The linker 2 stretch occupies residues 15–17; sequence YQE. The coil 2B stretch occupies residues 18–135; sequence RVAHMESSLG…TLLEAENSRL (118 aa). S133 bears the Phosphoserine mark. The tail stretch occupies residues 136–1818; sequence QTPGRSSQAS…DRDSWSSGED (1683 aa). Phosphothreonine is present on residues T137 and T160. Position 180 is a phosphoserine (S180). Residue T210 is modified to Phosphothreonine. 4 disordered regions span residues 266-309, 336-355, 377-451, and 480-787; these read EEAG…GSSI, AQETQEDGLHTEEIQDSQGP, HETP…SPEG, and AFKK…EEDQ. Residue S288 is modified to Phosphoserine. A compositionally biased stretch (basic and acidic residues) spans 292–303; sequence PVLEAKDGDSTE. Over residues 382–398 the composition is skewed to polar residues; the sequence is KENCNSLRSVDENQGTL. A phosphoserine mark is found at S390 and S400. Basic and acidic residues-rich tracts occupy residues 400–427 and 434–443; these read SPEEEKQTLLKSLEEKDVEVEKTLEKGV and LGKEDPRIED. S448 bears the Phosphoserine mark. Residues 495–508 show a composition bias toward basic and acidic residues; it reads EIQRVERLIEKEGQ. S513 is modified (phosphoserine). Composition is skewed to basic and acidic residues over residues 521–536 and 565–586; these read TDRPLEKENGEPLKPV and TDRPLEKEEDQLVERLVEKEGQ. A Phosphoserine modification is found at S591. 3 stretches are compositionally biased toward basic and acidic residues: residues 599–614, 643–664, and 711–732; these read TDRPLEKENGEPLKPV, TDRPLEKEEDQLVERLVEKEGQ, and TDRPLEKEEDQRVERLIEKEGQ. A Phosphoserine modification is found at S737. Residues 744–773 show a composition bias toward basic and acidic residues; sequence ETYRLLEKENGEPLKPVEEEDQRVERLIEK. Phosphoserine occurs at positions 803 and 824. The interval 866 to 900 is disordered; the sequence is ESLLKKGTQESLESHEDRNQETQDPQRFLEEEGQG. The span at 868 to 886 shows a compositional bias: basic and acidic residues; sequence LLKKGTQESLESHEDRNQE. Phosphoserine occurs at positions 915 and 957. The tract at residues 945-998 is disordered; it reads SLLERESQDSGKSLEGQEAFRCLGKEDPESLQFPEVQDQEIQRSLQQETQQTLG. Positions 986 to 997 are enriched in polar residues; sequence QRSLQQETQQTL. Residue K1043 forms a Glycyl lysine isopeptide (Lys-Gly) (interchain with G-Cter in SUMO1); alternate linkage. K1043 participates in a covalent cross-link: Glycyl lysine isopeptide (Lys-Gly) (interchain with G-Cter in SUMO2); alternate. Residues S1052, S1063, S1073, S1123, S1134, S1162, and S1238 each carry the phosphoserine modification. Disordered stretches follow at residues 1134–1262 and 1334–1818; these read SPEA…LEGQ and HPSL…SGED. Composition is skewed to basic and acidic residues over residues 1342-1361 and 1401-1416; these read VEAKIAHDLEGPGKEPKEAG and ASDHEGSDAPEPRPSE. A compositionally biased stretch (acidic residues) spans 1490 to 1505; it reads QDWEESREESEADELG. S1495, S1499, and S1523 each carry phosphoserine. Acidic residues predominate over residues 1570-1579; that stretch reads LSSEEFEDLG. A phosphoserine mark is found at S1614 and S1623. Over residues 1616-1636 the composition is skewed to acidic residues; that stretch reads GFADEEESGEEGEEEEHEDGT. The span at 1686–1697 shows a compositional bias: polar residues; that stretch reads GLETESQDSAEP. A phosphoserine mark is found at S1698, S1700, S1791, S1814, and S1815. The span at 1698 to 1708 shows a compositional bias: low complexity; that stretch reads SGSEVSESVSS.

Belongs to the intermediate filament family. In terms of assembly, interacts with FHOD3. Forms homodimers and homotetramers in vitro. In mixtures with other intermediate filament proteins such as vimentin and alpha-internexin, preferentially forms heterodimers which can assemble to form intermediate filaments if nestin does not exceed 25%. Post-translationally, constitutively phosphorylated. This increases during mitosis when the cytoplasmic intermediate filament network is reorganized.

Its function is as follows. Required for brain and eye development. Promotes the disassembly of phosphorylated vimentin intermediate filaments (IF) during mitosis and may play a role in the trafficking and distribution of IF proteins and other cellular factors to daughter cells during progenitor cell division. Required for survival, renewal and mitogen-stimulated proliferation of neural progenitor cells. This Mesocricetus auratus (Golden hamster) protein is Nestin.